The primary structure comprises 102 residues: Small ribosomal subunit protein uS10 (102 aa).

Residues 37–61 (PIPLPTKSLKITTRKSTDGEGSSSF) form a disordered region.

The protein belongs to the universal ribosomal protein uS10 family. Part of the 30S ribosomal subunit.

Its function is as follows. Involved in the binding of tRNA to the ribosomes. The polypeptide is Small ribosomal subunit protein uS10 (Methanococcus vannielii (strain ATCC 35089 / DSM 1224 / JCM 13029 / OCM 148 / SB)).